A 618-amino-acid chain; its full sequence is Dihydroxy-acid dehydratase (618 aa).

Aspartate 81 is a Mg(2+) binding site. A [2Fe-2S] cluster-binding site is contributed by cysteine 122. The Mg(2+) site is built by aspartate 123 and lysine 124. Lysine 124 carries the N6-carboxylysine modification. Residue cysteine 197 coordinates [2Fe-2S] cluster. Glutamate 493 serves as a coordination point for Mg(2+). Serine 519 (proton acceptor) is an active-site residue.

It belongs to the IlvD/Edd family. Homodimer. [2Fe-2S] cluster is required as a cofactor. Requires Mg(2+) as cofactor.

The enzyme catalyses (2R)-2,3-dihydroxy-3-methylbutanoate = 3-methyl-2-oxobutanoate + H2O. The catalysed reaction is (2R,3R)-2,3-dihydroxy-3-methylpentanoate = (S)-3-methyl-2-oxopentanoate + H2O. The protein operates within amino-acid biosynthesis; L-isoleucine biosynthesis; L-isoleucine from 2-oxobutanoate: step 3/4. It participates in amino-acid biosynthesis; L-valine biosynthesis; L-valine from pyruvate: step 3/4. Functionally, functions in the biosynthesis of branched-chain amino acids. Catalyzes the dehydration of (2R,3R)-2,3-dihydroxy-3-methylpentanoate (2,3-dihydroxy-3-methylvalerate) into 2-oxo-3-methylpentanoate (2-oxo-3-methylvalerate) and of (2R)-2,3-dihydroxy-3-methylbutanoate (2,3-dihydroxyisovalerate) into 2-oxo-3-methylbutanoate (2-oxoisovalerate), the penultimate precursor to L-isoleucine and L-valine, respectively. This Bordetella avium (strain 197N) protein is Dihydroxy-acid dehydratase.